The primary structure comprises 370 residues: Fe(2+) transport protein 2 (370 aa).

The N-terminal stretch at 1-25 is a signal peptide; the sequence is MMMSSSQTPVRIAFVFLVILAATDA. At 26–55 the chain is on the extracellular side; that stretch reads HSDHRTPPPACGGAAVGGECHSVARALRLK. A helical membrane pass occupies residues 56 to 76; it reads LIAIPAILAASVAGVCLPLFA. Topologically, residues 77–85 are cytoplasmic; sequence RSVPALRPD. Residues 86 to 106 traverse the membrane as a helical segment; the sequence is GGLFAVVKAFASGVILGTGYM. Over 107–130 the chain is Extracellular; it reads HVLPDSFNDLTSPCLPRKPWSEFP. A helical membrane pass occupies residues 131-151; the sequence is FAAFVAMLAAVFTLMVDSLML. At 152-215 the chain is on the cytoplasmic side; the sequence is TFHTRGSKGR…TTKAQLLRNR (64 aa). Residues 216 to 236 traverse the membrane as a helical segment; that stretch reads VIVQVLEMGIVVHSVVIGLGM. Residues 237 to 247 are Extracellular-facing; it reads GASQNVCTIRP. A helical transmembrane segment spans residues 248–268; sequence LVAALCFHQMFEGMGLGGCIL. Topologically, residues 269 to 278 are cytoplasmic; the sequence is QAGYGGRTRS. Residues 279-299 form a helical membrane-spanning segment; that stretch reads ALVFFFSTTTPFGIALGLALT. Topologically, residues 300–309 are extracellular; that stretch reads RVYSDSSPTA. A helical transmembrane segment spans residues 310-330; the sequence is LVVVGLLNAASAGLLHYMALV. At 331-349 the chain is on the cytoplasmic side; the sequence is ELLAADFMGPKLQGNVRLQ. Residues 350 to 370 form a helical membrane-spanning segment; it reads LAASLAILLGAGGMSVMAKWA.

It belongs to the ZIP transporter (TC 2.A.5) family.

It is found in the cell membrane. Iron transporter that may play a role in the uptake of iron from the rhizosphere across the plasma membrane in the root epidermal layer. The protein is Fe(2+) transport protein 2 (IRT2) of Oryza sativa subsp. japonica (Rice).